The following is a 219-amino-acid chain: Cyclin-U4-3 (219 aa).

The protein belongs to the cyclin family. Cyclin U/P subfamily. In terms of assembly, interacts with CDKA-1. Expressed at low levels in roots, stems and flowers. Expressed in the shoot apex, leaf primordia and young leaves.

The chain is Cyclin-U4-3 (CYCU4-3) from Arabidopsis thaliana (Mouse-ear cress).